A 208-amino-acid polypeptide reads, in one-letter code: UPF0637 protein BCB4264_A4063 (208 aa).

Belongs to the UPF0637 family.

The protein is UPF0637 protein BCB4264_A4063 of Bacillus cereus (strain B4264).